The following is a 145-amino-acid chain: Ribosomal RNA large subunit methyltransferase H (145 aa).

S-adenosyl-L-methionine-binding positions include L62, G94, and 113–118; that span reads LGQLTL.

Belongs to the RNA methyltransferase RlmH family. As to quaternary structure, homodimer.

The protein localises to the cytoplasm. The catalysed reaction is pseudouridine(1915) in 23S rRNA + S-adenosyl-L-methionine = N(3)-methylpseudouridine(1915) in 23S rRNA + S-adenosyl-L-homocysteine + H(+). Specifically methylates the pseudouridine at position 1915 (m3Psi1915) in 23S rRNA. This chain is Ribosomal RNA large subunit methyltransferase H, found in Deinococcus deserti (strain DSM 17065 / CIP 109153 / LMG 22923 / VCD115).